A 47-amino-acid chain; its full sequence is Delta-actitoxin-Ael1b (47 aa).

Disulfide bonds link Cys4–Cys44, Cys6–Cys34, and Cys27–Cys45.

It belongs to the sea anemone sodium channel inhibitory toxin family. Type I subfamily.

The protein localises to the secreted. The protein resides in the nematocyst. Its function is as follows. Produces a positive inotropic effect in mammalian heart muscle. Modifies current passing through the fast sodium channel (Nav) in neuroblastoma cells, leading to delayed and incomplete inactivation. Paralyzes the shore crab (C.maenas) by tetanic contractions after intramuscular injection. The polypeptide is Delta-actitoxin-Ael1b (Anthopleura elegantissima (Green aggregating anemone)).